A 216-amino-acid chain; its full sequence is MALCLKQVFSKDKTFRPRKRFEPGTQRFELYKKAQASLKSGLDLRSVVRLPPGENIDDWIAVHVVDFFNRINLIYGTMAERCSETSCPVMAGGPRYEYRWQDERQYRRPAKLSAPRYMALLMDWIESLINDEDVFPTRVGVPFPKNFQQVCTKILTRLFRVFVHVYIHHFDSILSMGAEAHVNTCYKHFYYFIREFSLVDQRELEPLREMTERICH.

The Zn(2+) site is built by Cys82, Cys87, His164, and His169.

Belongs to the MOB1/phocein family.

Functionally, may regulate the activity of kinases. The sequence is that of MOB kinase activator 3C (MOB3C) from Bos taurus (Bovine).